The sequence spans 178 residues: Ribosome maturation factor RimP (178 aa).

Belongs to the RimP family.

The protein localises to the cytoplasm. In terms of biological role, required for maturation of 30S ribosomal subunits. The polypeptide is Ribosome maturation factor RimP (Streptococcus pyogenes serotype M3 (strain ATCC BAA-595 / MGAS315)).